The chain runs to 91 residues: LYR motif-containing protein 4 (91 aa).

Pantetheine 4'-phosphate is bound by residues Arg-6 and Lys-44. Lys-47 bears the N6-succinyllysine mark.

This sequence belongs to the complex I LYR family. Homodimer. Component of the mitochondrial core iron-sulfur cluster (ISC) complex composed of NFS1, LYRM4, NDUFAB1, ISCU, FXN, and FDX2; this complex is a heterohexamer containing two copies of each monomer. Component of the cyteine desulfurase complex composed of NFS1, LYRM4 and NDUFAB1; this complex contributes to the stability and cysteine desulfurase activity of NFS1. Interacts with FXN; this interaction is nickel-dependent. Interacts with the cytoplasmic form of NFS1; the complex increases the stability of NFS1. Forms a complex with the cytoplasmic form of NFS1; this complex increases the stability and cysteine desulfurase activity of NFS1. Interacts with NFS1. Component of a complex composed of FXN, NFS1, LYRM4 and ISCU.

Its subcellular location is the mitochondrion. The protein resides in the nucleus. The protein operates within cofactor biosynthesis; iron-sulfur cluster biosynthesis. Its function is as follows. Stabilizing factor, of the core iron-sulfur cluster (ISC) assembly complex, that regulates, in association with NDUFAB1, the stability and the cysteine desulfurase activity of NFS1 and participates in the [2Fe-2S] clusters assembly on the scaffolding protein ISCU. The core iron-sulfur cluster (ISC) assembly complex is involved in the de novo synthesis of a [2Fe-2S] cluster, the first step of the mitochondrial iron-sulfur protein biogenesis. This process is initiated by the cysteine desulfurase complex (NFS1:LYRM4:NDUFAB1) that produces persulfide which is delivered on the scaffold protein ISCU in a FXN-dependent manner. Then this complex is stabilized by FDX2 which provides reducing equivalents to accomplish the [2Fe-2S] cluster assembly. Finally, the [2Fe-2S] cluster is transferred from ISCU to chaperone proteins, including HSCB, HSPA9 and GLRX5. May also participates in the iron-sulfur protein biogenesis in the cytoplasm through its interaction with the cytoplasmic form of NFS1. This Mus musculus (Mouse) protein is LYR motif-containing protein 4.